Here is a 139-residue protein sequence, read N- to C-terminus: Large ribosomal subunit protein uL16 (139 aa).

Belongs to the universal ribosomal protein uL16 family. In terms of assembly, part of the 50S ribosomal subunit.

Functionally, binds 23S rRNA and is also seen to make contacts with the A and possibly P site tRNAs. This chain is Large ribosomal subunit protein uL16, found in Chlorobium luteolum (strain DSM 273 / BCRC 81028 / 2530) (Pelodictyon luteolum).